We begin with the raw amino-acid sequence, 413 residues long: Alpha-1-antitrypsin-like protein GS55-MS (413 aa).

Residues 1–24 form the signal peptide; it reads MPSSISWGLLLLAGLSCLVAGSLA. 3 N-linked (GlcNAc...) asparagine glycosylation sites follow: asparagine 65, asparagine 102, and asparagine 266. The tract at residues 368–387 is RCL; the sequence is GATFLEMMPMSLPPEVKFDK.

The protein belongs to the serpin family.

Its subcellular location is the secreted. In terms of biological role, inhibitor of serine proteases. Its primary target is elastase, but it also has a moderate affinity for plasmin and thrombin. In Ictidomys tridecemlineatus (Thirteen-lined ground squirrel), this protein is Alpha-1-antitrypsin-like protein GS55-MS.